The following is a 170-amino-acid chain: Cathelicidin antimicrobial peptide (170 aa).

A signal peptide spans 1–30 (MKTQRDGPSLGRWSLLLLLLGLTMPLAVIG). The propeptide at 31–131 (RVLSYQEAVL…DISCDKDKRK (101 aa)) is cathelin-like domain (CLD). The segment at 31–131 (RVLSYQEAVL…DISCDKDKRK (101 aa)) is cathelin-like domain (CLD). 2 disulfide bridges follow: C86–C97 and C108–C125. Residues 150–162 (LKKIGQKIKDFFG) are active core.

This sequence belongs to the cathelicidin family. Monomer, homodimer or homotrimer (in vitro). Oligomerizes as tetra- or hexamer in solution (in vitro). Post-translationally, proteolytically cleaved by proteinase PRTN3 into antibacterial peptide LL-37. Proteolytically cleaved by cathepsin CTSG and neutrophil elastase ELANE. In terms of processing, resistant to proteolytic degradation in solution, and when bound to both zwitterionic (mimicking mammalian membranes) and negatively charged membranes (mimicking bacterial membranes). After secretion onto the skin surface, the CAMP gene product is processed by a serine protease-dependent mechanism into multiple novel antimicrobial peptides distinct from and shorter than cathelicidin LL-37. These peptides show enhanced antimicrobial action, acquiring the ability to kill skin pathogens such as S.aureus, E.coli and C.albicans. These peptides have lost the ability to stimulate CXCL8/IL8 release from keratinocytes. The peptides act synergistically, killing bacteria at lower concentrations when present together, and maintain activity at increased salt condition.

It localises to the secreted. The protein localises to the vesicle. In terms of biological role, antimicrobial protein that is an integral component of the innate immune system. Binds to bacterial lipopolysaccharides (LPS). Acts via neutrophil N-formyl peptide receptors to enhance the release of CXCL2. Postsecretory processing generates multiple cathelicidin antimicrobial peptides with various lengths which act as a topical antimicrobial defense in sweat on skin. The unprocessed precursor form, cathelicidin antimicrobial peptide, inhibits the growth of Gram-negative E.coli and E.aerogenes with efficiencies comparable to that of the mature peptide LL-37 (in vitro). Its function is as follows. Antimicrobial peptide that is an integral component of the innate immune system. Binds to bacterial lipopolysaccharides (LPS). Causes membrane permeabilization by forming transmembrane pores (in vitro). Causes lysis of E.coli. Exhibits antimicrobial activity against Gram-negative bacteria such as P.aeruginosa, S.typhimurium, E.aerogenes, E.coli and P.syringae, Gram-positive bacteria such as L.monocytogenes, S.epidermidis, S.pyogenes and S.aureus, as well as vancomycin-resistant enterococci (in vitro). Exhibits antimicrobial activity against methicillin-resistant S.aureus, P.mirabilis, and C.albicans in low-salt media, but not in media containing 100 mM NaCl (in vitro). Forms chiral supramolecular assemblies with quinolone signal (PQS) molecules of P.aeruginosa, which may lead to interference of bacterial quorum signaling and perturbance of bacterial biofilm formation. May form supramolecular fiber-like assemblies on bacterial membranes. Induces cytokine and chemokine producation as well as TNF/TNFA and CSF2/GMCSF production in normal human keratinocytes. Exhibits hemolytic activity against red blood cells. Exhibits antimicrobial activity against E.coli and B.megaterium (in vitro). This chain is Cathelicidin antimicrobial peptide, found in Saguinus oedipus (Cotton-top tamarin).